The sequence spans 147 residues: Neocarzinostatin (147 aa).

A signal peptide spans M1–A34. Cystine bridges form between C71–C81 and C122–C127.

The protein belongs to the neocarzinostatin family.

Its function is as follows. NCS has antibiotic activity (for Gram-positive bacteria) and antitumor activity (for certain mouse tumors). NCS binds non-covalently to a chromophore which is the cytotoxic and mutagenic component of the antibiotic. The chromophore binds to DNA as a weak intercalator and causes single- and double-strand breaks. This is Neocarzinostatin (ncsA) from Streptomyces carzinostaticus.